The following is a 635-amino-acid chain: Early transcription factor 70 kDa subunit (635 aa).

The Helicase ATP-binding domain maps to 32–185 (RSIIDENKSV…SNIISLMSDE (154 aa)). 45–52 (HIMGSGKT) is an ATP binding site. Residues 135-138 (DEAH) carry the DEXH box motif. The region spanning 326 to 505 (KFKYFITKIE…TLPFDIKKLL (180 aa)) is the Helicase C-terminal domain.

This sequence belongs to the helicase family. VETF subfamily. In terms of assembly, heterodimer of a 70 kDa and a 82 kDa subunit. Part of the early transcription complex composed of ETF, RAP94, and the DNA-directed RNA polymerase.

It localises to the virion. In terms of biological role, acts with RNA polymerase to initiate transcription from early gene promoters. Is recruited by the RPO-associated protein of 94 kDa (RAP94) to form the early transcription complex, which also contains the core RNA polymerase. ETF heterodimer binds to early gene promoters. This chain is Early transcription factor 70 kDa subunit (VETFS), found in Oryctolagus cuniculus (Rabbit).